A 212-amino-acid chain; its full sequence is Cell division protein YtfB (212 aa).

A helical transmembrane segment spans residues 34 to 50 (GIIIAAIVLVVGFLLPS). A disordered region spans residues 88–127 (NDPDQVAPVAPEPIQEGQPEEQPQTTQTQPFQPDSGIDNQ). The segment covering 99–120 (EPIQEGQPEEQPQTTQTQPFQP) has biased composition (low complexity). Positions 117–212 (PFQPDSGIDN…QPDGSFIRAR (96 aa)) are oapA.

Belongs to the OapA family.

It is found in the cell inner membrane. Cell division protein whose function is related to the generation of a transient cell wall structure. Function is linked to the late stages of cell division. This chain is Cell division protein YtfB (ytfB), found in Escherichia coli (strain K12).